The sequence spans 375 residues: UDP-N-acetylglucosamine--N-acetylmuramyl-(pentapeptide) pyrophosphoryl-undecaprenol N-acetylglucosamine transferase (375 aa).

Residues 13 to 15, asparagine 124, arginine 165, serine 193, and glutamine 294 each bind UDP-N-acetyl-alpha-D-glucosamine; that span reads TGG.

This sequence belongs to the glycosyltransferase 28 family. MurG subfamily.

The protein resides in the cell inner membrane. The catalysed reaction is di-trans,octa-cis-undecaprenyl diphospho-N-acetyl-alpha-D-muramoyl-L-alanyl-D-glutamyl-meso-2,6-diaminopimeloyl-D-alanyl-D-alanine + UDP-N-acetyl-alpha-D-glucosamine = di-trans,octa-cis-undecaprenyl diphospho-[N-acetyl-alpha-D-glucosaminyl-(1-&gt;4)]-N-acetyl-alpha-D-muramoyl-L-alanyl-D-glutamyl-meso-2,6-diaminopimeloyl-D-alanyl-D-alanine + UDP + H(+). Its pathway is cell wall biogenesis; peptidoglycan biosynthesis. Functionally, cell wall formation. Catalyzes the transfer of a GlcNAc subunit on undecaprenyl-pyrophosphoryl-MurNAc-pentapeptide (lipid intermediate I) to form undecaprenyl-pyrophosphoryl-MurNAc-(pentapeptide)GlcNAc (lipid intermediate II). In Brucella anthropi (strain ATCC 49188 / DSM 6882 / CCUG 24695 / JCM 21032 / LMG 3331 / NBRC 15819 / NCTC 12168 / Alc 37) (Ochrobactrum anthropi), this protein is UDP-N-acetylglucosamine--N-acetylmuramyl-(pentapeptide) pyrophosphoryl-undecaprenol N-acetylglucosamine transferase.